The following is a 489-amino-acid chain: Cytochrome P450 monooxygenase orf5 (489 aa).

The helical transmembrane segment at 13 to 35 (FVRLLAFHLIGLFVSITVYRLFF) threads the bilayer. Residues Asn37, Asn118, Asn171, and Asn345 are each glycosylated (N-linked (GlcNAc...) asparagine). Position 428 (Cys428) interacts with heme.

It belongs to the cytochrome P450 family. It depends on heme as a cofactor.

The protein resides in the membrane. The protein operates within mycotoxin biosynthesis. Functionally, cytochrome P450 monooxygenase; part of the gene cluster that mediates the biosynthesis of brefeldin A (BFA), a protein transport inhibitor that shows antiviral, antifungal, and antitumor properties. The proposed biosynthesis of BFA involves formation of an acyclic polyketide chain that is differentially tailored throughout the backbone. The highly reducing polyketide synthase Bref-PKS is proposed to synthesize the precisely reduced octaketide precursor, which could then be directly offloaded by the thiohydrolase enzyme Bref-TH followed by a cytochrome P450 monooxygenase-mediated formation of the cyclopentane ring and macrocyclization to afford 7-deoxy BFA. Alternatively, the first ring annulation can also occur on the ACP-tethered intermediate before the thiohydrolase release and lactonization. The C7-hydroxylation by another cytochrome P450 monooxygenase is believed to be the final step in the process to obtain the final structure of BFA. In addition to the HRPKS Bref-PKS and the thiohydrolase Bref-TH, the brefeldin A biosynthesis cluster contains 4 cytochrome p450 monooxygenases (called orf3 to orf6), as well a the probable cluster-specific transcription regulator orf8. The protein is Cytochrome P450 monooxygenase orf5 of Eupenicillium brefeldianum (Penicillium brefeldianum).